The chain runs to 95 residues: UPF0358 protein BcerKBAB4_3775 (95 aa).

The protein belongs to the UPF0358 family.

This chain is UPF0358 protein BcerKBAB4_3775, found in Bacillus mycoides (strain KBAB4) (Bacillus weihenstephanensis).